We begin with the raw amino-acid sequence, 382 residues long: Glutamyl-tRNA reductase (382 aa).

Residues Thr38–Arg41, Ser85, Glu90–Gln92, and Gln96 each bind substrate. Cys39 (nucleophile) is an active-site residue. Gly164–Gly169 provides a ligand contact to NADP(+).

The protein belongs to the glutamyl-tRNA reductase family. In terms of assembly, homodimer.

It catalyses the reaction (S)-4-amino-5-oxopentanoate + tRNA(Glu) + NADP(+) = L-glutamyl-tRNA(Glu) + NADPH + H(+). Its pathway is porphyrin-containing compound metabolism; protoporphyrin-IX biosynthesis; 5-aminolevulinate from L-glutamyl-tRNA(Glu): step 1/2. Functionally, catalyzes the NADPH-dependent reduction of glutamyl-tRNA(Glu) to glutamate 1-semialdehyde (GSA). This chain is Glutamyl-tRNA reductase, found in Methanococcus maripaludis (strain C6 / ATCC BAA-1332).